A 223-amino-acid chain; its full sequence is RNA-free ribonuclease P (223 aa).

The protein belongs to the HARP family.

The enzyme catalyses Endonucleolytic cleavage of RNA, removing 5'-extranucleotides from tRNA precursor.. Its function is as follows. RNA-free RNase P that catalyzes the removal of the 5'-leader sequence from pre-tRNA to produce the mature 5'-terminus. In Methanococcus maripaludis (strain C6 / ATCC BAA-1332), this protein is RNA-free ribonuclease P.